The sequence spans 405 residues: Deoxyguanosinetriphosphate triphosphohydrolase-like protein (405 aa).

In terms of domain architecture, HD spans 75-219; it reads RLTHTIEVAQ…AAIADDIAYN (145 aa).

This sequence belongs to the dGTPase family. Type 2 subfamily.

This chain is Deoxyguanosinetriphosphate triphosphohydrolase-like protein, found in Rhizobium meliloti (strain 1021) (Ensifer meliloti).